The following is a 553-amino-acid chain: Phosphomethylpyrimidine synthase (553 aa).

Substrate-binding positions include Asn-192, Met-221, Tyr-250, His-286, 306-308 (SRG), 347-350 (DGLR), and Glu-386. His-390 contacts Zn(2+). Substrate is bound at residue Tyr-413. Residue His-454 participates in Zn(2+) binding. [4Fe-4S] cluster contacts are provided by Cys-534, Cys-537, and Cys-542.

This sequence belongs to the ThiC family. Homodimer. It depends on [4Fe-4S] cluster as a cofactor.

The catalysed reaction is 5-amino-1-(5-phospho-beta-D-ribosyl)imidazole + S-adenosyl-L-methionine = 4-amino-2-methyl-5-(phosphooxymethyl)pyrimidine + CO + 5'-deoxyadenosine + formate + L-methionine + 3 H(+). Its pathway is cofactor biosynthesis; thiamine diphosphate biosynthesis. Catalyzes the synthesis of the hydroxymethylpyrimidine phosphate (HMP-P) moiety of thiamine from aminoimidazole ribotide (AIR) in a radical S-adenosyl-L-methionine (SAM)-dependent reaction. This Anaplasma marginale (strain St. Maries) protein is Phosphomethylpyrimidine synthase.